Here is a 417-residue protein sequence, read N- to C-terminus: Putative F-box protein At3g58950 (417 aa).

One can recognise an F-box domain in the interval 1 to 53 (MDLFSSLPDEVLCHILSFLTTKEAALASVVSKRWRNQFALVPNLDIDEEGKRE).

The chain is Putative F-box protein At3g58950 from Arabidopsis thaliana (Mouse-ear cress).